Consider the following 557-residue polypeptide: MFSDIEIARQAKLRKISEIAAELGLNEDSITLYGQYKAKIDLNANPQLQAQPDGKLILVTAISPSPAGEGKTTTTVGLGDALQRMGKRAVICLREPSMGPVFGMKGGAAGGGYAQVVPMEDINLHFTGDFASIALAHNLLAAMIDNHIHHGNALQIDPRQVTWKRVIDMNDRALRQVVIGLGGKVNGQPREDGFDIVVASEVMAVFCLADSLKDLRTRLGRIVVGYTYSGQPVTAQDLKAHGAMTVLLKDAIKPNLVQTLEHTPALLHGGPFANIAHGCNSVIATRTALKLGDYVVTEAGFGADLGAEKFIDIKCRKAGLHPDACVIVATIRALKYHGGADVSALSREDMLALDRGIANLEKHVENVTTHYGMPAVIALNRFDHDTEAELALVMKRMGEMGIKVVVAEHWAKGGAGAESLAAHVLQLIEGRSEGVRYVYESSETLWEKVNQVARKIYGAMDVHAPRPVRAMIDRLQDAGYGHYPICIAKTQYSFSTDASRRGVPHEHILTVRAVRLCAGAEFVVIICDDIMTMPGLPEEPCAIRMDIDDDGQVVGLY.

65–72 serves as a coordination point for ATP; that stretch reads SPAGEGKT.

This sequence belongs to the formate--tetrahydrofolate ligase family.

It carries out the reaction (6S)-5,6,7,8-tetrahydrofolate + formate + ATP = (6R)-10-formyltetrahydrofolate + ADP + phosphate. It functions in the pathway one-carbon metabolism; tetrahydrofolate interconversion. This is Formate--tetrahydrofolate ligase from Methylobacillus flagellatus (strain ATCC 51484 / DSM 6875 / VKM B-1610 / KT).